The primary structure comprises 172 residues: 3-hydroxydecanoyl-[acyl-carrier-protein] dehydratase (172 aa).

H71 is a catalytic residue.

The protein belongs to the thioester dehydratase family. FabA subfamily. As to quaternary structure, homodimer.

The protein resides in the cytoplasm. The enzyme catalyses a (3R)-hydroxyacyl-[ACP] = a (2E)-enoyl-[ACP] + H2O. The catalysed reaction is (3R)-hydroxydecanoyl-[ACP] = (2E)-decenoyl-[ACP] + H2O. It catalyses the reaction (2E)-decenoyl-[ACP] = (3Z)-decenoyl-[ACP]. Its pathway is lipid metabolism; fatty acid biosynthesis. Functionally, necessary for the introduction of cis unsaturation into fatty acids. Catalyzes the dehydration of (3R)-3-hydroxydecanoyl-ACP to E-(2)-decenoyl-ACP and then its isomerization to Z-(3)-decenoyl-ACP. Can catalyze the dehydratase reaction for beta-hydroxyacyl-ACPs with saturated chain lengths up to 16:0, being most active on intermediate chain length. This Escherichia coli (strain SE11) protein is 3-hydroxydecanoyl-[acyl-carrier-protein] dehydratase.